The sequence spans 271 residues: Mannosyl-3-phosphoglycerate phosphatase (271 aa).

D13 functions as the Nucleophile in the catalytic mechanism. Mg(2+) is bound by residues D13, D15, and D214.

Belongs to the HAD-like hydrolase superfamily. MPGP family. The cofactor is Mg(2+).

The protein localises to the cytoplasm. It carries out the reaction 2-O-(alpha-D-mannosyl)-3-phosphoglycerate + H2O = (2R)-2-O-(alpha-D-mannosyl)-glycerate + phosphate. The sequence is that of Mannosyl-3-phosphoglycerate phosphatase from Escherichia coli (strain K12 / DH10B).